A 332-amino-acid polypeptide reads, in one-letter code: Ribose-phosphate pyrophosphokinase (332 aa).

Residues 43–45 (DGE) and 102–103 (RQ) each bind ATP. Residues His-136 and Asp-176 each contribute to the Mg(2+) site. Residue Lys-199 is part of the active site. D-ribose 5-phosphate is bound by residues Arg-201, Asp-225, and 229-233 (DTGGT).

The protein belongs to the ribose-phosphate pyrophosphokinase family. Class I subfamily. As to quaternary structure, homohexamer. Mg(2+) is required as a cofactor.

The protein resides in the cytoplasm. The enzyme catalyses D-ribose 5-phosphate + ATP = 5-phospho-alpha-D-ribose 1-diphosphate + AMP + H(+). It functions in the pathway metabolic intermediate biosynthesis; 5-phospho-alpha-D-ribose 1-diphosphate biosynthesis; 5-phospho-alpha-D-ribose 1-diphosphate from D-ribose 5-phosphate (route I): step 1/1. Its function is as follows. Involved in the biosynthesis of the central metabolite phospho-alpha-D-ribosyl-1-pyrophosphate (PRPP) via the transfer of pyrophosphoryl group from ATP to 1-hydroxyl of ribose-5-phosphate (Rib-5-P). The polypeptide is Ribose-phosphate pyrophosphokinase (Mycoplasma genitalium (strain ATCC 33530 / DSM 19775 / NCTC 10195 / G37) (Mycoplasmoides genitalium)).